A 518-amino-acid chain; its full sequence is Serine/threonine-protein kinase UL13 (518 aa).

Disordered regions lie at residues 1–22 (MDESGRQRPASHVAADISPQGA) and 39–120 (SRRA…PSPP). Over residues 44 to 61 (GRPSGPSPRDGAVSGARP) the composition is skewed to low complexity. Residues 151 to 518 (PGARSFGGSG…ANPAARHSLS (368 aa)) form the Protein kinase domain. ATP contacts are provided by residues 157-165 (GGSGGYGEV) and K176. The active-site Proton acceptor is D277.

The protein belongs to the protein kinase superfamily. Ser/Thr protein kinase family. Post-translationally, autophosphorylated.

The protein localises to the virion tegument. Its subcellular location is the host nucleus. It carries out the reaction L-seryl-[protein] + ATP = O-phospho-L-seryl-[protein] + ADP + H(+). The catalysed reaction is L-threonyl-[protein] + ATP = O-phospho-L-threonyl-[protein] + ADP + H(+). In terms of biological role, multifunctional serine/threonine kinase that plays a role in several processes including egress of virus particles from the nucleus, modulation of the actin cytoskeleton and regulation of viral and cellular gene expression. Regulates the nuclear localization of viral envelopment factors UL34 and UL31, by phosphorylating the US3 kinase, indicating a role in nuclear egress. Disrupts host nuclear lamins, including LMNA and LMNB1. Phosphorylates the viral Fc receptor composed of glycoproteins E (gE) and I (gI). Phosphorylation of glycoprotein E (gE) by UL13 alters its subcellular localization, from the host early endosome to the plasma membrane. Participates in the transcriptional regulation of cellular and viral mRNAs mainly by phosphorylating the viral transcriptional regulator ICP22. Additional substrates have been identified, including UL41, UL49 or host EF1D. The polypeptide is Serine/threonine-protein kinase UL13 (Homo sapiens (Human)).